The sequence spans 807 residues: Lysyl oxidase homolog 3B (807 aa).

An N-terminal signal peptide occupies residues 1 to 24 (MELHQWCRHIIVFLLNVWIPSCFA). SRCR domains lie at 49-150 (FRLS…VICK), 175-288 (VRLR…VSCV), 309-409 (TRLK…VRCN), 419-470 (VRIL…LGYA), and 476-579 (VRLS…VICS). 9 disulfides stabilise this stretch: Cys75–Cys139, Cys88–Cys149, Cys119–Cys129, Cys207–Cys277, Cys220–Cys287, Cys254–Cys264, Cys334–Cys398, Cys347–Cys408, and Cys378–Cys388. A glycan (N-linked (GlcNAc...) asparagine) is linked at Asn272. N-linked (GlcNAc...) asparagine glycosylation is present at Asn392. Cystine bridges form between Cys514–Cys578 and Cys547–Cys557. Asn536 is a glycosylation site (N-linked (GlcNAc...) asparagine). Asn679 carries N-linked (GlcNAc...) asparagine glycosylation. A cross-link (lysine tyrosylquinone (Lys-Tyr)) is located at residues 688–724 (KASFCLEDTDCDEGVSKRYKCANFGEQGITVGCWDLY). Tyr724 is modified (2',4',5'-topaquinone).

Belongs to the lysyl oxidase family. The cofactor is Cu cation. Lysine tyrosylquinone residue is required as a cofactor. In terms of processing, the lysine tyrosylquinone cross-link (LTQ) is generated by condensation of the epsilon-amino group of a lysine with a topaquinone produced by oxidation of tyrosine.

It is found in the secreted. The protein localises to the extracellular space. It localises to the cytoplasm. Its subcellular location is the nucleus. The enzyme catalyses L-lysyl-[protein] + O2 + H2O = (S)-2-amino-6-oxohexanoyl-[protein] + H2O2 + NH4(+). It catalyses the reaction N(6)-acetyl-L-lysyl-[protein] + O2 + H2O = acetamide + (S)-2-amino-6-oxohexanoyl-[protein] + H2O2. Protein-lysine 6-oxidase that mediates the oxidation of peptidyl lysine residues to allysine in target proteins. Catalyzes the post-translational oxidative deamination of peptidyl lysine residues in precursors of elastin and different types of collagens, a prerequisite in the formation of cross-links between collagens and elastin. Can mediate oxidation of lysine residues that are acetylated. Also able to catalyze deacetylation of lysine residues. Required for maturation of neural crest derived cartilage elements. The sequence is that of Lysyl oxidase homolog 3B from Danio rerio (Zebrafish).